A 98-amino-acid chain; its full sequence is MARRRKPLHRQRPEPPSWALRRVEAGPDGHEYEVRPVAAARAVKTYRCPGCDHEIRSGTAHVVVWPTDLPQAGVDDRRHWHTPCWANRATRGPTRKWT.

Residues 1–10 (MARRRKPLHR) are compositionally biased toward basic residues. The disordered stretch occupies residues 1-21 (MARRRKPLHRQRPEPPSWALR).

This is an uncharacterized protein from Mycobacterium bovis (strain ATCC BAA-935 / AF2122/97).